Consider the following 175-residue polypeptide: RNA pyrophosphohydrolase (175 aa).

A Nudix hydrolase domain is found at 6 to 149 (GYRPNVGIIL…KRQVYQQALT (144 aa)). Positions 38–59 (GGIKHGESPEQAMYRELYEEVG) match the Nudix box motif.

This sequence belongs to the Nudix hydrolase family. RppH subfamily. A divalent metal cation serves as cofactor.

Accelerates the degradation of transcripts by removing pyrophosphate from the 5'-end of triphosphorylated RNA, leading to a more labile monophosphorylated state that can stimulate subsequent ribonuclease cleavage. This Azoarcus sp. (strain BH72) protein is RNA pyrophosphohydrolase.